The following is a 142-amino-acid chain: Glycine-rich RNA-binding protein 1 (142 aa).

Residues 1-65 enclose the RRM domain; the sequence is NSLHSAFSTY…RNITVNEAQS (65 aa). Positions 48–101 are disordered; that stretch reads MNGKELDGRNITVNEAQSRGGRGGGGGGGYGGGRGGGGGYGRRDGGGGGYGGGG. The span at 67–101 shows a compositional bias: gly residues; that stretch reads GGRGGGGGGGYGGGRGGGGGYGRRDGGGGGYGGGG.

Its function is as follows. Possibly has a role in RNA transcription or processing during stress. This Sorghum bicolor (Sorghum) protein is Glycine-rich RNA-binding protein 1 (GRP1).